A 245-amino-acid chain; its full sequence is Ribonuclease 3 (245 aa).

An RNase III domain is found at 24-146 (YAVFLQKLGY…IIGAIYLESG (123 aa)). Glu-59 is a Mg(2+) binding site. Asp-63 is an active-site residue. Positions 132 and 135 each coordinate Mg(2+). Glu-135 is an active-site residue. The region spanning 173–243 (DSKTLLQEYL…ARQAYELAIV (71 aa)) is the DRBM domain.

It belongs to the ribonuclease III family. As to quaternary structure, homodimer. Mg(2+) is required as a cofactor.

The protein localises to the cytoplasm. It catalyses the reaction Endonucleolytic cleavage to 5'-phosphomonoester.. Functionally, digests double-stranded RNA. Involved in the processing of primary rRNA transcript to yield the immediate precursors to the large and small rRNAs (23S and 16S). Processes some mRNAs, and tRNAs when they are encoded in the rRNA operon. Processes pre-crRNA and tracrRNA of type II CRISPR loci if present in the organism. The chain is Ribonuclease 3 from Nitrosomonas europaea (strain ATCC 19718 / CIP 103999 / KCTC 2705 / NBRC 14298).